A 174-amino-acid polypeptide reads, in one-letter code: Achaete-scute homolog 3 (174 aa).

The tract at residues 92 to 105 is basic motif; that stretch reads AFIRKRNERERQRV. A bHLH domain is found at 92–144; sequence AFIRKRNERERQRVKCVNEGYARLRRHLPEDYLEKRLSKVETLRAAIKYISYL. Residues 106–144 form a helix-loop-helix motif region; that stretch reads KCVNEGYARLRRHLPEDYLEKRLSKVETLRAAIKYISYL. The segment at 153–174 is disordered; the sequence is SETKKNPRTASCGSLDPALRVI.

In terms of assembly, efficient DNA binding requires dimerization with another bHLH protein. Expressed in the salivary duct cells. Also expressed at lower levels in testis and epididymis. Expressed in the olfactory epithelium (OE), in a subset of apical microvillar cells.

The protein resides in the nucleus. Its function is as follows. Transcriptional repressor. Inhibits myogenesis. Plays a role in progenitor cells which differentiate into ductal and acinar, but not myoepithelial, cell lineages in the salivary glands. Involved in the functions of the microvillar cells and Bowman's glands and probably, in a non-cell-autonomous manner, in the development or regeneration of a complete olfactory epithelium (OE). This Mus musculus (Mouse) protein is Achaete-scute homolog 3 (Ascl3).